Reading from the N-terminus, the 306-residue chain is TnpB-like protein aq_aa05 (306 aa).

Residues cysteine 213, cysteine 216, cysteine 234, and cysteine 237 each coordinate Zn(2+).

The protein belongs to the transposase 35 family.

The sequence is that of TnpB-like protein aq_aa05 from Aquifex aeolicus (strain VF5).